We begin with the raw amino-acid sequence, 199 residues long: Protein shisa-like-1 (199 aa).

A signal peptide spans 1–25 (MTSCGQQSLNVLAVLFSLLFSAVLS). The Extracellular segment spans residues 26–97 (AHFRVCEPYT…SEGYMHNNYT (72 aa)). N-linked (GlcNAc...) asparagine glycans are attached at residues Asn-53 and Asn-95. A helical membrane pass occupies residues 98–118 (ALLGVWIYGFFVLMLLVLDLL). Residues 119–199 (YYSAMNYDIC…PLMTFQSSSA (81 aa)) lie on the Cytoplasmic side of the membrane. Positions 146-199 (PRRWGNPARAPRPGQRAPQPQPPPGPLPQAPQAVHTLRGDAHSPPLMTFQSSSA) are disordered. The span at 152-163 (PARAPRPGQRAP) shows a compositional bias: low complexity. Positions 164–174 (QPQPPPGPLPQ) are enriched in pro residues.

The protein belongs to the shisa family.

It localises to the membrane. This is Protein shisa-like-1 from Homo sapiens (Human).